Here is a 336-residue protein sequence, read N- to C-terminus: UDP-3-O-acylglucosamine N-acyltransferase (336 aa).

H233 (proton acceptor) is an active-site residue.

It belongs to the transferase hexapeptide repeat family. LpxD subfamily. In terms of assembly, homotrimer.

It catalyses the reaction a UDP-3-O-[(3R)-3-hydroxyacyl]-alpha-D-glucosamine + a (3R)-hydroxyacyl-[ACP] = a UDP-2-N,3-O-bis[(3R)-3-hydroxyacyl]-alpha-D-glucosamine + holo-[ACP] + H(+). It functions in the pathway bacterial outer membrane biogenesis; LPS lipid A biosynthesis. Its function is as follows. Catalyzes the N-acylation of UDP-3-O-acylglucosamine using 3-hydroxyacyl-ACP as the acyl donor. Is involved in the biosynthesis of lipid A, a phosphorylated glycolipid that anchors the lipopolysaccharide to the outer membrane of the cell. This Helicobacter pylori (strain ATCC 700392 / 26695) (Campylobacter pylori) protein is UDP-3-O-acylglucosamine N-acyltransferase.